Consider the following 220-residue polypeptide: Cytidylate kinase (220 aa).

10–18 (GPASSGKST) contacts ATP.

Belongs to the cytidylate kinase family. Type 1 subfamily.

It is found in the cytoplasm. The catalysed reaction is CMP + ATP = CDP + ADP. It catalyses the reaction dCMP + ATP = dCDP + ADP. The chain is Cytidylate kinase from Lactococcus lactis subsp. lactis (strain IL1403) (Streptococcus lactis).